The sequence spans 504 residues: Anaerobic nitric oxide reductase transcription regulator NorR (504 aa).

Aspartate 57 bears the 4-aspartylphosphate mark. Positions 187-416 constitute a Sigma-54 factor interaction domain; sequence MIGLSPGMTQ…LEHAIHRAVV (230 aa). ATP contacts are provided by residues 215-222 and 278-287; these read GETGTGKE and ADNGTLFLDE. Positions 479-498 form a DNA-binding region, H-T-H motif; it reads WAASARMLETDVANLHRLAK.

The protein operates within nitrogen metabolism; nitric oxide reduction. Its function is as follows. Required for the expression of anaerobic nitric oxide (NO) reductase, acts as a transcriptional activator for at least the norVW operon. Activation also requires sigma-54. This chain is Anaerobic nitric oxide reductase transcription regulator NorR, found in Escherichia coli O7:K1 (strain IAI39 / ExPEC).